A 406-amino-acid chain; its full sequence is Tyrosine--tRNA ligase (406 aa).

Tyr-35 contacts L-tyrosine. A 'HIGH' region motif is present at residues 40–49; the sequence is PTGPSLHIGH. Residues Tyr-168 and Gln-172 each coordinate L-tyrosine. A 'KMSKS' region motif is present at residues 228 to 232; it reads KMGKS. Lys-231 serves as a coordination point for ATP. The S4 RNA-binding domain occupies 339-405; sequence IGIIDLFAEA…GKKRFMRIIF (67 aa).

It belongs to the class-I aminoacyl-tRNA synthetase family. TyrS type 1 subfamily. As to quaternary structure, homodimer.

The protein localises to the cytoplasm. The catalysed reaction is tRNA(Tyr) + L-tyrosine + ATP = L-tyrosyl-tRNA(Tyr) + AMP + diphosphate + H(+). Its function is as follows. Catalyzes the attachment of tyrosine to tRNA(Tyr) in a two-step reaction: tyrosine is first activated by ATP to form Tyr-AMP and then transferred to the acceptor end of tRNA(Tyr). In Treponema denticola (strain ATCC 35405 / DSM 14222 / CIP 103919 / JCM 8153 / KCTC 15104), this protein is Tyrosine--tRNA ligase.